Reading from the N-terminus, the 296-residue chain is Lipoyl synthase (296 aa).

7 residues coordinate [4Fe-4S] cluster: cysteine 38, cysteine 43, cysteine 49, cysteine 64, cysteine 68, cysteine 71, and serine 279. The Radical SAM core domain maps to 50–268 (WDGGCLTFMV…AEYGRSLGFK (219 aa)).

The protein belongs to the radical SAM superfamily. Lipoyl synthase family. [4Fe-4S] cluster is required as a cofactor.

Its subcellular location is the cytoplasm. It carries out the reaction [[Fe-S] cluster scaffold protein carrying a second [4Fe-4S](2+) cluster] + N(6)-octanoyl-L-lysyl-[protein] + 2 oxidized [2Fe-2S]-[ferredoxin] + 2 S-adenosyl-L-methionine + 4 H(+) = [[Fe-S] cluster scaffold protein] + N(6)-[(R)-dihydrolipoyl]-L-lysyl-[protein] + 4 Fe(3+) + 2 hydrogen sulfide + 2 5'-deoxyadenosine + 2 L-methionine + 2 reduced [2Fe-2S]-[ferredoxin]. It participates in protein modification; protein lipoylation via endogenous pathway; protein N(6)-(lipoyl)lysine from octanoyl-[acyl-carrier-protein]: step 2/2. Catalyzes the radical-mediated insertion of two sulfur atoms into the C-6 and C-8 positions of the octanoyl moiety bound to the lipoyl domains of lipoate-dependent enzymes, thereby converting the octanoylated domains into lipoylated derivatives. The polypeptide is Lipoyl synthase (Methanocella arvoryzae (strain DSM 22066 / NBRC 105507 / MRE50)).